A 316-amino-acid polypeptide reads, in one-letter code: Protoheme IX farnesyltransferase (316 aa).

Transmembrane regions (helical) follow at residues 32 to 52 (VMSLVIFTALTGVLIAPTHVN), 53 to 73 (PIIGFASLLAIAAGAGASGAL), 98 to 118 (VARESALAFGMVLALLSVITL), 120 to 140 (FVANWAAAALLAFTIFFYVVI), 153 to 173 (IVIGGAAGAFPPIVAYLAVAG), 180 to 200 (LALFAIIFVWTPPHFWALALV), 226 to 246 (ILLYTLLLAPIGMTPYFIGFA), 251 to 271 (GLLSFGLGGVMILHAVRVYLA), and 280 to 300 (VAMRMFGFSILYLFLLFAAIV).

The protein belongs to the UbiA prenyltransferase family. Protoheme IX farnesyltransferase subfamily.

The protein resides in the cell inner membrane. The enzyme catalyses heme b + (2E,6E)-farnesyl diphosphate + H2O = Fe(II)-heme o + diphosphate. Its pathway is porphyrin-containing compound metabolism; heme O biosynthesis; heme O from protoheme: step 1/1. Its function is as follows. Converts heme B (protoheme IX) to heme O by substitution of the vinyl group on carbon 2 of heme B porphyrin ring with a hydroxyethyl farnesyl side group. This is Protoheme IX farnesyltransferase from Methylocella silvestris (strain DSM 15510 / CIP 108128 / LMG 27833 / NCIMB 13906 / BL2).